Here is a 216-residue protein sequence, read N- to C-terminus: ATP phosphoribosyltransferase (216 aa).

This sequence belongs to the ATP phosphoribosyltransferase family. Short subfamily. As to quaternary structure, heteromultimer composed of HisG and HisZ subunits.

It is found in the cytoplasm. It catalyses the reaction 1-(5-phospho-beta-D-ribosyl)-ATP + diphosphate = 5-phospho-alpha-D-ribose 1-diphosphate + ATP. It functions in the pathway amino-acid biosynthesis; L-histidine biosynthesis; L-histidine from 5-phospho-alpha-D-ribose 1-diphosphate: step 1/9. Functionally, catalyzes the condensation of ATP and 5-phosphoribose 1-diphosphate to form N'-(5'-phosphoribosyl)-ATP (PR-ATP). Has a crucial role in the pathway because the rate of histidine biosynthesis seems to be controlled primarily by regulation of HisG enzymatic activity. This Synechococcus sp. (strain CC9902) protein is ATP phosphoribosyltransferase.